A 385-amino-acid chain; its full sequence is Mannitol-1-phosphate 5-dehydrogenase (385 aa).

4 to 15 (AVHFGAGNIGRG) is an NAD(+) binding site.

Belongs to the mannitol dehydrogenase family.

The enzyme catalyses D-mannitol 1-phosphate + NAD(+) = beta-D-fructose 6-phosphate + NADH + H(+). This is Mannitol-1-phosphate 5-dehydrogenase from Lactococcus lactis subsp. lactis (strain IL1403) (Streptococcus lactis).